The chain runs to 614 residues: Pyrophosphate--fructose 6-phosphate 1-phosphotransferase subunit alpha 1 (614 aa).

The protein belongs to the phosphofructokinase type A (PFKA) family. PPi-dependent PFK group II subfamily. Clade 'Long' sub-subfamily. As to quaternary structure, tetramer of two alpha (regulatory) and two beta (catalytic) chains. As to expression, expressed in leaves, roots, and flowers (e.g. sepals, petals, stamen and gynoecium).

Its subcellular location is the cytoplasm. It functions in the pathway carbohydrate degradation; glycolysis; D-glyceraldehyde 3-phosphate and glycerone phosphate from D-glucose: step 3/4. Its activity is regulated as follows. Allosterically activated by fructose 2,6-bisphosphate. Functionally, regulatory subunit of pyrophosphate--fructose 6-phosphate 1-phosphotransferase. This Arabidopsis thaliana (Mouse-ear cress) protein is Pyrophosphate--fructose 6-phosphate 1-phosphotransferase subunit alpha 1.